A 171-amino-acid chain; its full sequence is S-ribosylhomocysteine lyase (171 aa).

Fe cation-binding residues include His54, His58, and Cys128.

Belongs to the LuxS family. Homodimer. Fe cation is required as a cofactor.

It carries out the reaction S-(5-deoxy-D-ribos-5-yl)-L-homocysteine = (S)-4,5-dihydroxypentane-2,3-dione + L-homocysteine. Involved in the synthesis of autoinducer 2 (AI-2) which is secreted by bacteria and is used to communicate both the cell density and the metabolic potential of the environment. The regulation of gene expression in response to changes in cell density is called quorum sensing. Catalyzes the transformation of S-ribosylhomocysteine (RHC) to homocysteine (HC) and 4,5-dihydroxy-2,3-pentadione (DPD). This is S-ribosylhomocysteine lyase from Yersinia enterocolitica serotype O:8 / biotype 1B (strain NCTC 13174 / 8081).